Reading from the N-terminus, the 436-residue chain is Tubulin epsilon and delta complex protein 2 (436 aa).

Disordered regions lie at residues 53 to 76 and 94 to 191; these read ARTP…PSSQ and VRKG…PSSA. Over residues 111 to 131 the composition is skewed to low complexity; it reads TSKAATSGAAAASHPRAPSRG. Residues 153–170 show a composition bias toward basic and acidic residues; the sequence is DYPEHRLRSKGDKTHVRT. Position 161 is a phosphoserine (Ser-161).

In terms of assembly, interacts with TEDC1. Found in a complex with TEDC1, TEDC2, TUBE1 and TUBD1.

It is found in the cell projection. The protein resides in the cilium. The protein localises to the cytoplasm. It localises to the cytoskeleton. Its subcellular location is the microtubule organizing center. It is found in the centrosome. The protein resides in the centriole. Functionally, acts as a positive regulator of ciliary hedgehog signaling. Required for centriole stability. The sequence is that of Tubulin epsilon and delta complex protein 2 from Mus musculus (Mouse).